A 284-amino-acid chain; its full sequence is Bifunctional protein FolD (284 aa).

NADP(+) contacts are provided by residues 166–168 and Ile-232; that span reads GAS.

Belongs to the tetrahydrofolate dehydrogenase/cyclohydrolase family. As to quaternary structure, homodimer.

It catalyses the reaction (6R)-5,10-methylene-5,6,7,8-tetrahydrofolate + NADP(+) = (6R)-5,10-methenyltetrahydrofolate + NADPH. It carries out the reaction (6R)-5,10-methenyltetrahydrofolate + H2O = (6R)-10-formyltetrahydrofolate + H(+). Its pathway is one-carbon metabolism; tetrahydrofolate interconversion. Its function is as follows. Catalyzes the oxidation of 5,10-methylenetetrahydrofolate to 5,10-methenyltetrahydrofolate and then the hydrolysis of 5,10-methenyltetrahydrofolate to 10-formyltetrahydrofolate. The chain is Bifunctional protein FolD from Shewanella amazonensis (strain ATCC BAA-1098 / SB2B).